The primary structure comprises 251 residues: Hydroxyacylglutathione hydrolase GloB (251 aa).

Zn(2+) is bound by residues His-53, His-55, Asp-57, His-58, His-110, and Asp-127. Residues 136-138, 165-167, and 245-248 contribute to the substrate site; these read RLF, HEY, and RSKK. His-165 serves as a coordination point for Zn(2+).

The protein belongs to the metallo-beta-lactamase superfamily. Glyoxalase II family. Monomer. The cofactor is Zn(2+).

It catalyses the reaction an S-(2-hydroxyacyl)glutathione + H2O = a 2-hydroxy carboxylate + glutathione + H(+). The catalysed reaction is (R)-S-lactoylglutathione + H2O = (R)-lactate + glutathione + H(+). The protein operates within secondary metabolite metabolism; methylglyoxal degradation; (R)-lactate from methylglyoxal: step 2/2. Is inhibited by Cu(2+). Functionally, type II glyoxalase that catalyzes the hydrolysis of (R)-S-lactoylglutathione to (R)-lactate and glutathione. Is more efficient than the isozyme GloC, and plays a major contribution to methylglyoxal (MG) detoxification in E.coli. The two isoenzymes have additive effects and ensure maximal MG degradation. This chain is Hydroxyacylglutathione hydrolase GloB, found in Escherichia coli (strain K12).